The following is a 701-amino-acid chain: Elongation factor G (701 aa).

The tr-type G domain maps to 11–287 (TKVRNIGIMA…AVIDYLPSPL (277 aa)). GTP-binding positions include 20 to 27 (AHIDAGKT), 84 to 88 (DTPGH), and 138 to 141 (NKMD).

It belongs to the TRAFAC class translation factor GTPase superfamily. Classic translation factor GTPase family. EF-G/EF-2 subfamily.

The protein resides in the cytoplasm. Its function is as follows. Catalyzes the GTP-dependent ribosomal translocation step during translation elongation. During this step, the ribosome changes from the pre-translocational (PRE) to the post-translocational (POST) state as the newly formed A-site-bound peptidyl-tRNA and P-site-bound deacylated tRNA move to the P and E sites, respectively. Catalyzes the coordinated movement of the two tRNA molecules, the mRNA and conformational changes in the ribosome. This Mycobacterium marinum (strain ATCC BAA-535 / M) protein is Elongation factor G.